Consider the following 568-residue polypeptide: Serine/threonine-protein kinase RIO1 (568 aa).

Disordered stretches follow at residues 14–70 and 83–109; these read GQFD…DDDW and YVWN…STPA. 2 positions are modified to phosphoserine: serine 21 and serine 22. Basic and acidic residues predominate over residues 24–38; that stretch reads SENRDLKTVKEKDDI. Residues 51 to 70 show a composition bias toward acidic residues; sequence GEGEIEDEEEEGYDDDDDDW. Residues 87 to 105 are compositionally biased toward polar residues; the sequence is GGSNPQANRQTSDSSSAKM. Positions 180–479 constitute a Protein kinase domain; the sequence is TEINGCISTG…TGLKKDLSGV (300 aa). ATP is bound by residues lysine 208, serine 278, and isoleucine 280. Aspartate 324 acts as the Proton acceptor in catalysis. Positions 329 and 341 each coordinate Mg(2+). The 4-aspartylphosphate intermediate role is filled by aspartate 341. A disordered region spans residues 490–568; it reads VEERTCSDSE…EKTAKTKKGK (79 aa). Acidic residues predominate over residues 497-513; it reads DSEDIGSSECSDTDSEE. Basic and acidic residues predominate over residues 514 to 543; the sequence is QGDHARPKKHTTDPDIDKKERKKMVKEAQR. Over residues 544 to 568 the composition is skewed to basic residues; the sequence is EKRKNKIPKHVKKRKEKTAKTKKGK.

It belongs to the protein kinase superfamily. RIO-type Ser/Thr kinase family. Associates with the precursor of the 40S ribosome subunit. Interacts (via its N-terminus) with PRMT5 (via its N-terminus). Interacts with WDR77. Found in a PRMT5 complex composed of PRMT5, WDR77 and RIOK1. Interacts (via its C-terminus) with NCL; this interaction targets NCL for PRTM5 methylation. Requires Mg(2+) as cofactor.

The protein resides in the cytoplasm. Its subcellular location is the cytosol. The catalysed reaction is L-seryl-[protein] + ATP = O-phospho-L-seryl-[protein] + ADP + H(+). The enzyme catalyses L-threonyl-[protein] + ATP = O-phospho-L-threonyl-[protein] + ADP + H(+). It catalyses the reaction ATP + H2O = ADP + phosphate + H(+). In terms of biological role, involved in the final steps of cytoplasmic maturation of the 40S ribosomal subunit. Involved in processing of 18S-E pre-rRNA to the mature 18S rRNA. Required for the recycling of NOB1 and PNO1 from the late 40S precursor. The association with the very late 40S subunit intermediate may involve a translation-like checkpoint point cycle preceeding the binding to the 60S ribosomal subunit. Despite the protein kinase domain is proposed to act predominantly as an ATPase. The catalytic activity regulates its dynamic association with the 40S subunit. In addition to its role in ribosomal biogenesis acts as an adapter protein by recruiting NCL/nucleolin the to PRMT5 complex for its symmetrical methylation. This is Serine/threonine-protein kinase RIO1 from Homo sapiens (Human).